The sequence spans 485 residues: MELFFICGLVLFSTLSLISLFLLHNHSSARGYRLPPGRMGWPFIGESYEFLANGWKGYPEKFIFSRLAKYKPNQVFKTSILGEKVAVMCGATCNKFLFSNEGKLVNAWWPNSVNKIFPSSTQTSSKEEAKKMRKLLPTFFKPEALQRYIPIMDEIAIRHMEDEWEGKSKIEVFPLAKRYTFWLACRLFLSIDDPVHVAKFADPFNDIASGIISIPIDLPGTPFNRGIKASNVVRQELKTIIKQRKLDLSDNKASPTQDILSHMLLTPDEDGRYMNELDIADKILGLLIGGHDTASAACTFVVKFLAELPHIYDGVYKEQMEIAKSKKEGERLNWEDIQKMKYSWNVACEVMRLAPPLQGAFREALSDFMYAGFQIPKGWKLYWSANSTHRNPECFPEPEKFDPARFDGSGPAPYTYVPFGGGPRMCPGKEYARLEILVFMHNIVKRFKWEKLIPDETIVVNPMPTPAKGLPVRLRPHSKPVTVSA.

The chain crosses the membrane as a helical; Signal-anchor for type II membrane protein span at residues 3-23 (LFFICGLVLFSTLSLISLFLL). N-linked (GlcNAc...) asparagine glycosylation is found at N25 and N386. C426 lines the heme pocket.

This sequence belongs to the cytochrome P450 family. Requires heme as cofactor. As to expression, mainly expressed in flowers and flower buds, to a lesser extent in young leaves and, at low levels, in old leaves, stems and roots.

The protein resides in the membrane. The enzyme catalyses beta-amyrin + 3 reduced [NADPH--hemoprotein reductase] + 3 O2 = oleanolate + 3 oxidized [NADPH--hemoprotein reductase] + 4 H2O + 4 H(+). The protein operates within secondary metabolite biosynthesis; terpenoid biosynthesis. Component of the oleanane-type triterpene saponins (e.g. saponarioside A and saponarioside B) biosynthetic pathway, leading to the production of natural products with detergent properties used as traditional sources of soap. An oxidoreductase that facilitates the oxidation of the methyl group to a carboxyl group at the C-28 position of beta-amyrin, resulting in the formation of oleanolate. The sequence is that of Beta-amyrin 28-monooxygenase CYP716A378 from Saponaria officinalis (Common soapwort).